The following is a 453-amino-acid chain: Trigger factor (453 aa).

Positions 171 to 256 (GDRVTVSFKG…ATLVEAPKDT (86 aa)) constitute a PPIase FKBP-type domain.

Belongs to the FKBP-type PPIase family. Tig subfamily.

The protein resides in the cytoplasm. It carries out the reaction [protein]-peptidylproline (omega=180) = [protein]-peptidylproline (omega=0). Functionally, involved in protein export. Acts as a chaperone by maintaining the newly synthesized protein in an open conformation. Functions as a peptidyl-prolyl cis-trans isomerase. This is Trigger factor from Rhodopseudomonas palustris (strain BisA53).